The following is a 116-amino-acid chain: Large ribosomal subunit protein bL17 (116 aa).

Belongs to the bacterial ribosomal protein bL17 family. Part of the 50S ribosomal subunit. Contacts protein L32.

The polypeptide is Large ribosomal subunit protein bL17 (Prochlorococcus marinus (strain MIT 9515)).